The primary structure comprises 605 residues: UvrABC system protein C (605 aa).

The 80-residue stretch at 13–92 (TSPGVYLMKD…IKKHHPKYNV (80 aa)) folds into the GIY-YIG domain. Residues 205 to 240 (SEIIQDLEKSIEKASQEQKFEQAGIYYRTLKLIQQA) form the UVR domain.

Belongs to the UvrC family. Interacts with UvrB in an incision complex.

The protein localises to the cytoplasm. Functionally, the UvrABC repair system catalyzes the recognition and processing of DNA lesions. UvrC both incises the 5' and 3' sides of the lesion. The N-terminal half is responsible for the 3' incision and the C-terminal half is responsible for the 5' incision. This Chlamydia caviae (strain ATCC VR-813 / DSM 19441 / 03DC25 / GPIC) (Chlamydophila caviae) protein is UvrABC system protein C.